The sequence spans 303 residues: Tyrosine recombinase XerC (303 aa).

Residues 1–85 (MRADLDAFLE…ATRGLYQYLL (85 aa)) form the Core-binding (CB) domain. A Tyr recombinase domain is found at 106 to 285 (KLPRTLDADR…DFQHLASVYD (180 aa)). Active-site residues include Arg-146, Lys-170, His-237, Arg-240, and His-263. Residue Tyr-272 is the O-(3'-phospho-DNA)-tyrosine intermediate of the active site.

The protein belongs to the 'phage' integrase family. XerC subfamily. In terms of assembly, forms a cyclic heterotetrameric complex composed of two molecules of XerC and two molecules of XerD.

It localises to the cytoplasm. Site-specific tyrosine recombinase, which acts by catalyzing the cutting and rejoining of the recombining DNA molecules. The XerC-XerD complex is essential to convert dimers of the bacterial chromosome into monomers to permit their segregation at cell division. It also contributes to the segregational stability of plasmids. This chain is Tyrosine recombinase XerC, found in Pseudomonas aeruginosa (strain LESB58).